The sequence spans 503 residues: Probable cytochrome P450 6a19 (503 aa).

Residue cysteine 445 participates in heme binding.

The protein belongs to the cytochrome P450 family. Heme serves as cofactor.

The protein localises to the endoplasmic reticulum membrane. The protein resides in the microsome membrane. Functionally, may be involved in the metabolism of insect hormones and in the breakdown of synthetic insecticides. The protein is Probable cytochrome P450 6a19 (Cyp6a19) of Drosophila melanogaster (Fruit fly).